The following is a 353-amino-acid chain: Alcohol dehydrogenase 1 (353 aa).

7 residues coordinate Zn(2+): C47, H70, C101, C104, C107, C115, and C157. Residues 181–187 (GAGGGLG), D205, K210, 274–276 (IGL), and R346 contribute to the NAD(+) site.

The protein belongs to the zinc-containing alcohol dehydrogenase family. In terms of assembly, homotetramer. Requires Zn(2+) as cofactor.

The protein resides in the cytoplasm. The catalysed reaction is a primary alcohol + NAD(+) = an aldehyde + NADH + H(+). It catalyses the reaction a secondary alcohol + NAD(+) = a ketone + NADH + H(+). This Neurospora crassa (strain ATCC 24698 / 74-OR23-1A / CBS 708.71 / DSM 1257 / FGSC 987) protein is Alcohol dehydrogenase 1 (adh-1).